The sequence spans 588 residues: Probable cytochrome c oxidase subunit 1-beta (588 aa).

A disordered region spans residues 1 to 26 (MTATPAQRRPALPATRPYPARHGPKG). A helical transmembrane segment spans residues 43 to 63 (VLYLVSATGFFLIGGLLALLM). H87 contacts Fe(II)-heme a. 6 consecutive transmembrane segments (helical) span residues 90–110 (IMLL…VLPL), 128–148 (WLYL…GGAA), 171–191 (LWIL…VNMI), 214–234 (ILIT…ALMA), 259–279 (LFWF…FGII), and 291–311 (IFGY…SMAV). Cu cation contacts are provided by H265 and Y269. The 1'-histidyl-3'-tyrosine (His-Tyr) cross-link spans 265–269 (HPEVY). Residues H314 and H315 each contribute to the Cu cation site. 2 helical membrane-spanning segments follow: residues 320–340 (GAVL…PTGV) and 360–380 (MLFA…GVIL). H398 contributes to the heme a3 binding site. 3 helical membrane-spanning segments follow: residues 399–419 (FHYV…YFWF), 434–454 (LHFW…HWLG), and 477–497 (VSTI…WNGF). H400 is a Fe(II)-heme a binding site. The disordered stretch occupies residues 557–588 (AEAHAGRRAGHGAGAELSVPSTVATKDDDHTS).

It belongs to the heme-copper respiratory oxidase family. In terms of assembly, associates with subunits II, III and IV to form cytochrome c oxidase. Cu(2+) is required as a cofactor. Requires heme as cofactor.

Its subcellular location is the cell membrane. It catalyses the reaction 4 Fe(II)-[cytochrome c] + O2 + 8 H(+)(in) = 4 Fe(III)-[cytochrome c] + 2 H2O + 4 H(+)(out). It participates in energy metabolism; oxidative phosphorylation. Functionally, cytochrome c oxidase is the component of the respiratory chain that catalyzes the reduction of oxygen to water. Subunits 1-3 form the functional core of the enzyme complex. CO I is the catalytic subunit of the enzyme. Electrons originating in cytochrome c are transferred via the copper A center of subunit 2 and heme A of subunit 1 to the bimetallic center formed by heme A3 and copper B. This chain is Probable cytochrome c oxidase subunit 1-beta (ctaD2), found in Nocardia farcinica (strain IFM 10152).